The following is a 498-amino-acid chain: ATP synthase subunit beta, chloroplastic (498 aa).

Position 172–179 (172–179) interacts with ATP; the sequence is GGAGVGKT.

Belongs to the ATPase alpha/beta chains family. As to quaternary structure, F-type ATPases have 2 components, CF(1) - the catalytic core - and CF(0) - the membrane proton channel. CF(1) has five subunits: alpha(3), beta(3), gamma(1), delta(1), epsilon(1). CF(0) has four main subunits: a(1), b(1), b'(1) and c(9-12).

It localises to the plastid. The protein localises to the chloroplast thylakoid membrane. It catalyses the reaction ATP + H2O + 4 H(+)(in) = ADP + phosphate + 5 H(+)(out). Its function is as follows. Produces ATP from ADP in the presence of a proton gradient across the membrane. The catalytic sites are hosted primarily by the beta subunits. In Nymphaea alba (White water-lily), this protein is ATP synthase subunit beta, chloroplastic.